The primary structure comprises 277 residues: Putative pyruvate, phosphate dikinase regulatory protein (277 aa).

Residue Gly151–Thr158 coordinates ADP.

The protein belongs to the pyruvate, phosphate/water dikinase regulatory protein family. PDRP subfamily.

It carries out the reaction N(tele)-phospho-L-histidyl/L-threonyl-[pyruvate, phosphate dikinase] + ADP = N(tele)-phospho-L-histidyl/O-phospho-L-threonyl-[pyruvate, phosphate dikinase] + AMP + H(+). It catalyses the reaction N(tele)-phospho-L-histidyl/O-phospho-L-threonyl-[pyruvate, phosphate dikinase] + phosphate + H(+) = N(tele)-phospho-L-histidyl/L-threonyl-[pyruvate, phosphate dikinase] + diphosphate. Its function is as follows. Bifunctional serine/threonine kinase and phosphorylase involved in the regulation of the pyruvate, phosphate dikinase (PPDK) by catalyzing its phosphorylation/dephosphorylation. The protein is Putative pyruvate, phosphate dikinase regulatory protein of Alkaliphilus oremlandii (strain OhILAs) (Clostridium oremlandii (strain OhILAs)).